A 620-amino-acid polypeptide reads, in one-letter code: Rhamnogalacturonan endolyase YesW (620 aa).

The N-terminal stretch at 1-37 is a signal peptide; it reads MRRSCLMIRRRKRMFTAVTLLVLLVMGTSVCPVKAEG. Positions 133 to 152 are disordered; sequence LDKPAGGTTPKGESYTYSAN. N152 lines the substrate pocket. Ca(2+) contacts are provided by D153, D158, D160, D162, Q164, and E166. Residue D172 coordinates substrate. Residues D187 and K207 each contribute to the a carbohydrate site. 5 residues coordinate Ca(2+): D222, D224, D226, K228, and E230. A carbohydrate contacts are provided by G238 and R255. Residues H363, D369, D371, D373, K375, E377, D386, H387, H399, D401, D407, D409, R412, G414, E416, and E422 each contribute to the Ca(2+) site. R452 contributes to the substrate binding site. Residues D457, D459, Y462, G464, E466, D496, D498, L500, and E502 each coordinate Ca(2+). 532–534 is a binding site for substrate; the sequence is NGT. D543, L545, D547, R549, E551, N592, and A594 together coordinate Ca(2+). Y595 provides a ligand contact to substrate. N596 contributes to the Ca(2+) binding site.

It belongs to the polysaccharide lyase 11 family. As to quaternary structure, monomer. The cofactor is Ca(2+). Requires Mn(2+) as cofactor.

Its subcellular location is the secreted. The enzyme catalyses Endotype eliminative cleavage of L-alpha-rhamnopyranosyl-(1-&gt;4)-alpha-D-galactopyranosyluronic acid bonds of rhamnogalacturonan I domains in ramified hairy regions of pectin leaving L-rhamnopyranose at the reducing end and 4-deoxy-4,5-unsaturated D-galactopyranosyluronic acid at the non-reducing end.. Pectinolytic enzyme that degrades type I rhamnogalacturonan from plant cell walls and releases oligosaccharide products. Degrades rhamnogalacturonan, polygalacturonic acid, pectic acid and pectin. This chain is Rhamnogalacturonan endolyase YesW (yesW), found in Bacillus subtilis (strain 168).